Reading from the N-terminus, the 259-residue chain is 3-hydroxypropionyl-coenzyme A dehydratase (259 aa).

E113 functions as the Nucleophile in the catalytic mechanism. Residue E133 is the Proton acceptor of the active site.

Belongs to the enoyl-CoA hydratase/isomerase family. As to quaternary structure, monomer.

The enzyme catalyses 3-hydroxypropanoyl-CoA = acryloyl-CoA + H2O. Plays a role in autotrophic carbon fixation via the 3-hydroxypropionate/4-hydroxybutyrate cycle. Catalyzes the reversible dehydration of 3-hydroxypropionyl-CoA to form acryloyl-CoA, and the reversible dehydration of (S)-3-hydroxybutyryl-CoA to form crotonyl-CoA. Inactive towards (R)-3-hydroxybutyryl-CoA. This Metallosphaera sedula (strain ATCC 51363 / DSM 5348 / JCM 9185 / NBRC 15509 / TH2) protein is 3-hydroxypropionyl-coenzyme A dehydratase.